The sequence spans 394 residues: Salivary plasminogen activator gamma (394 aa).

The N-terminal stretch at 1–36 (MVNTMKTKLLCVLLLCGAVFSLPRQETYRQLARGSR) is a signal peptide. The Kringle domain occupies 45–126 (CYKDQGVTYR…TSESCSVPVC (82 aa)). 9 disulfide bridges follow: cysteine 45/cysteine 126, cysteine 66/cysteine 108, cysteine 97/cysteine 121, cysteine 131/cysteine 262, cysteine 174/cysteine 190, cysteine 182/cysteine 251, cysteine 276/cysteine 351, cysteine 308/cysteine 324, and cysteine 341/cysteine 369. Residues 143-393 (STGGLFTDIT…YLGWIRDNMR (251 aa)) enclose the Peptidase S1 domain. Residues histidine 189 and aspartate 238 each act as charge relay system in the active site. N-linked (GlcNAc...) asparagine glycosylation occurs at asparagine 315. Residue serine 345 is the Charge relay system of the active site.

This sequence belongs to the peptidase S1 family. Monomer.

It localises to the secreted. It catalyses the reaction Specific cleavage of Arg-|-Val bond in plasminogen to form plasmin.. In terms of biological role, probably essential to support the feeding habits of this exclusively haematophagous animal. Probable potent thrombolytic agent. The chain is Salivary plasminogen activator gamma from Desmodus rotundus (Vampire bat).